A 213-amino-acid chain; its full sequence is LexA repressor (213 aa).

The segment at residues Gln-27–Glu-47 is a DNA-binding region (H-T-H motif). Active-site for autocatalytic cleavage activity residues include Ser-133 and Lys-170.

Belongs to the peptidase S24 family. In terms of assembly, homodimer.

It catalyses the reaction Hydrolysis of Ala-|-Gly bond in repressor LexA.. Functionally, represses a number of genes involved in the response to DNA damage (SOS response), including recA and lexA. Has been shown to bind to the palindromic sequence 5'-CTG-N(8-12)-C-[TC]-G. In the presence of single-stranded DNA, RecA interacts with LexA causing an autocatalytic cleavage which disrupts the DNA-binding part of LexA, leading to derepression of the SOS regulon and eventually DNA repair. In Xanthomonas citri (Xanthomonas campestris pv. citri), this protein is LexA repressor.